The sequence spans 128 residues: Sulfurtransferase TusD (128 aa).

Catalysis depends on C78, which acts as the Cysteine persulfide intermediate.

The protein belongs to the DsrE/TusD family. Heterohexamer, formed by a dimer of trimers. The hexameric TusBCD complex contains 2 copies each of TusB, TusC and TusD. The TusBCD complex interacts with TusE.

The protein localises to the cytoplasm. Functionally, part of a sulfur-relay system required for 2-thiolation of 5-methylaminomethyl-2-thiouridine (mnm(5)s(2)U) at tRNA wobble positions. Accepts sulfur from TusA and transfers it in turn to TusE. This is Sulfurtransferase TusD from Escherichia coli O45:K1 (strain S88 / ExPEC).